The chain runs to 324 residues: bZIP transcription factor 46 (324 aa).

A disordered region spans residues 106 to 127 (LGGSDDEDPAAAAAAAAPAQRQ). Residues 115 to 124 (AAAAAAAAPA) show a composition bias toward low complexity. The bZIP domain maps to 242-287 (VERRQRRMIKNRESAARSRARKQAYIMELEAEVAKLKEQKAELQKK). The tract at residues 244–263 (RRQRRMIKNRESAARSRARK) is basic motif. Positions 270–284 (LEAEVAKLKEQKAEL) are leucine-zipper.

Interacts with MODD. Interacts with SAPK2, SAPK6 and SAPK9. In terms of processing, phosphorylated on serine and threonine residues by SAPK2, SAPK6 and SAPK9. Phosphorylation is required for full transactivation activity. In terms of tissue distribution, expressed in roots, shoots, leaves, flag leaves, stems, flowers and panicles. Widely expressed.

Its subcellular location is the nucleus. Its function is as follows. Transcription factor involved in abscisic acid (ABA) signaling pathway. Transcription factor activity is fully activated by ABA. Acts as a positive regulator of the expression of abiotic stress-responsive genes through an ABA-dependent signaling pathway. Acts as a positive regulator of ABA signaling and drought stress tolerance. Plays an important role in ABA and auxin responses. Involved in ABA signaling and stress responses by directly binding to the ABA-responsive element (ABRE)-containing genes, especially WRKY family genes. Modulates response to auxin. Suppresses auxin signaling by targeting ABRE-containing genes related to auxin metabolism or signaling. The polypeptide is bZIP transcription factor 46 (Oryza sativa subsp. japonica (Rice)).